The primary structure comprises 202 residues: Xanthine phosphoribosyltransferase (202 aa).

Positions 20 and 27 each coordinate xanthine. 128–132 contributes to the 5-phospho-alpha-D-ribose 1-diphosphate binding site; the sequence is ASGGT. Xanthine is bound at residue lysine 156.

Belongs to the purine/pyrimidine phosphoribosyltransferase family. Xpt subfamily. Homodimer.

It localises to the cytoplasm. It catalyses the reaction XMP + diphosphate = xanthine + 5-phospho-alpha-D-ribose 1-diphosphate. Its pathway is purine metabolism; XMP biosynthesis via salvage pathway; XMP from xanthine: step 1/1. Its function is as follows. Converts the preformed base xanthine, a product of nucleic acid breakdown, to xanthosine 5'-monophosphate (XMP), so it can be reused for RNA or DNA synthesis. The sequence is that of Xanthine phosphoribosyltransferase from Deinococcus geothermalis (strain DSM 11300 / CIP 105573 / AG-3a).